The primary structure comprises 685 residues: Polyphosphate kinase (685 aa).

N45 lines the ATP pocket. Mg(2+) is bound by residues R375 and R405. Residue H435 is the Phosphohistidine intermediate of the active site. 3 residues coordinate ATP: Y468, R564, and H592.

The protein belongs to the polyphosphate kinase 1 (PPK1) family. Mg(2+) is required as a cofactor. Post-translationally, an intermediate of this reaction is the autophosphorylated ppk in which a phosphate is covalently linked to a histidine residue through a N-P bond.

It catalyses the reaction [phosphate](n) + ATP = [phosphate](n+1) + ADP. Its function is as follows. Catalyzes the reversible transfer of the terminal phosphate of ATP to form a long-chain polyphosphate (polyP). This is Polyphosphate kinase from Neisseria meningitidis serogroup A / serotype 4A (strain DSM 15465 / Z2491).